Consider the following 222-residue polypeptide: MKNNSQLLMPREKMLKFGISALTDVELLALFLRTGTRGKDVLTLAKEMLENFGSLYGLLTSEYEQFSGVHGIGVAKFAQLKGIAELARRYYNVRMREESPLLSPEMTREFLQSQLTGEEREIFMVIFLDSQHRVITHSRLFSGTLNHVEVHPREIIREAIKINASALILAHNHPSGCAEPSKADKLITERIIKSCQFMDLRVLDHIVIGRGENVSFAERGWI.

Residues 100–222 (PLLSPEMTRE…NVSFAERGWI (123 aa)) enclose the MPN domain. Zn(2+) contacts are provided by H171, H173, and D184. The short motif at 171–184 (HNHPSGCAEPSKAD) is the JAMM motif element.

It belongs to the UPF0758 family. YicR subfamily.

The chain is UPF0758 protein YicR from Shigella boydii serotype 18 (strain CDC 3083-94 / BS512).